Reading from the N-terminus, the 315-residue chain is L-threo-3-deoxy-hexylosonate aldolase (315 aa).

Position 50-51 (50-51 (SN)) interacts with substrate. The active-site Schiff-base intermediate with substrate is the lysine 174.

Belongs to the DapA family.

The enzyme catalyses 2-dehydro-3-deoxy-L-galactonate = L-glyceraldehyde + pyruvate. It participates in carbohydrate acid metabolism. Mediates the conversion of 2-dehydro-3-deoxy-L-galactonate to pyruvate and L-glyceraldehyde in D-galacturonate catabolic process. This is L-threo-3-deoxy-hexylosonate aldolase (lga1) from Hypocrea jecorina (Trichoderma reesei).